The following is a 250-amino-acid chain: MIVFNNVNKVWPNGKQVLKNINLEINKGELVAVIGLSGAGKTTLLKTINKINDISSGEILIDFDKTKEHYEVTKTRGKKLQKLRQKIGLMSQEYNNIANKTVLQNVLNARVSSQKGINKILGFFKREDKMIALNSLDKLNLLDYAYIRADNLSGGQQQRVALARTLAQQPFLIIADEPVSALDPILANQVMKDFKNINKKDGITVIINIHHVDLAKKYATRVIGLNNGEIVFDDVPSKLDAQAMKKIYGE.

The ABC transporter domain maps to 2–247 (IVFNNVNKVW…KLDAQAMKKI (246 aa)). 35 to 42 (GLSGAGKT) is an ATP binding site.

Belongs to the ABC transporter superfamily. Phosphonates importer (TC 3.A.1.9.1) family. The complex is composed of two ATP-binding proteins (PhnC), two transmembrane proteins (PhnE) and a solute-binding protein (PhnD).

It localises to the cell membrane. It catalyses the reaction phosphonate(out) + ATP + H2O = phosphonate(in) + ADP + phosphate + H(+). Its function is as follows. Part of the ABC transporter complex PhnCDE involved in phosphonates import. Responsible for energy coupling to the transport system. This Mycoplasma mycoides subsp. mycoides SC (strain CCUG 32753 / NCTC 10114 / PG1) protein is Phosphonates import ATP-binding protein PhnC.